The sequence spans 160 residues: 2-amino-4-hydroxy-6-hydroxymethyldihydropteridine pyrophosphokinase (160 aa).

It belongs to the HPPK family.

The catalysed reaction is 6-hydroxymethyl-7,8-dihydropterin + ATP = (7,8-dihydropterin-6-yl)methyl diphosphate + AMP + H(+). The protein operates within cofactor biosynthesis; tetrahydrofolate biosynthesis; 2-amino-4-hydroxy-6-hydroxymethyl-7,8-dihydropteridine diphosphate from 7,8-dihydroneopterin triphosphate: step 4/4. Its function is as follows. Catalyzes the transfer of pyrophosphate from adenosine triphosphate (ATP) to 6-hydroxymethyl-7,8-dihydropterin, an enzymatic step in folate biosynthesis pathway. The polypeptide is 2-amino-4-hydroxy-6-hydroxymethyldihydropteridine pyrophosphokinase (folK) (Aquifex aeolicus (strain VF5)).